The primary structure comprises 172 residues: Antibacterial protein PR-39 (172 aa).

The N-terminal stretch at 1–29 (METQRASLCLGRWSLWLLLLGLVVPSASA) is a signal peptide. Q30 is subject to Pyrrolidone carboxylic acid. A propeptide spanning residues 30 to 130 (QALSYREAVL…DISCNEIQSV (101 aa)) is cleaved from the precursor. The tract at residues 61–80 (DQPPKADEDPGTPKPVSFTV) is disordered. Cystine bridges form between C85–C96 and C107–C124. Residues 130 to 172 (VRRRPRPPYLPRPRPPPFFPPRLPPRIPPGFPPRFPPRFPGKR) form a disordered region. Pro residues predominate over residues 136–172 (PPYLPRPRPPPFFPPRLPPRIPPGFPPRFPPRFPGKR). P169 bears the Proline amide mark.

The protein belongs to the cathelicidin family. Small intestine and bone marrow.

It localises to the secreted. Its function is as follows. Exerts a potent antimicrobial activity against both E.coli and B.megaterium. In Sus scrofa (Pig), this protein is Antibacterial protein PR-39 (PR39).